The sequence spans 142 residues: Large ribosomal subunit protein uL13 (142 aa).

Belongs to the universal ribosomal protein uL13 family. Part of the 50S ribosomal subunit.

In terms of biological role, this protein is one of the early assembly proteins of the 50S ribosomal subunit, although it is not seen to bind rRNA by itself. It is important during the early stages of 50S assembly. This chain is Large ribosomal subunit protein uL13, found in Shewanella baltica (strain OS185).